Consider the following 552-residue polypeptide: Putative transport protein Spro_0050 (552 aa).

6 helical membrane passes run 4–24 (IALTVSMLALVAVLGLWMGNW), 26–46 (IYGVGLGIGGVLFGGIIVGHF), 65–85 (FGLILFVYTIGIQVGPGFFSS), 96–116 (FAILLVLVGGLVAAVVHKLFA), 117–137 (VPLPIILGVFSGAVTNTPALG), and 158–178 (MGYAMAYPFGICGILLVMWLI). 2 RCK C-terminal domains span residues 192–276 (AFAS…VIGE) and 279–361 (DVSL…IVGN). A run of 6 helical transmembrane segments spans residues 371–391 (MLPVFIGIGLGVLLGSIPLFI), 393–413 (GFPAALRLGLAGGPLVAALIL), 439–459 (IVLFLAVVGLKSGGNFVDTLI), 464–484 (LAWIGYGALITAIPLFSVGVL), 493–513 (YLTLSGMLAGSMTDPPALAFA), and 530–550 (VYPLAMFLRIMSPQLLAVLFW).

Belongs to the AAE transporter (TC 2.A.81) family. YidE subfamily.

The protein localises to the cell membrane. The protein is Putative transport protein Spro_0050 of Serratia proteamaculans (strain 568).